The chain runs to 263 residues: Type III pantothenate kinase (263 aa).

Asp-6–Lys-13 lines the ATP pocket. Residues Tyr-92 and Gly-99–Arg-102 contribute to the substrate site. Asp-101 acts as the Proton acceptor in catalysis. Thr-124 contributes to the ATP binding site. Thr-174 lines the substrate pocket.

This sequence belongs to the type III pantothenate kinase family. As to quaternary structure, homodimer. The cofactor is NH4(+). Requires K(+) as cofactor.

It localises to the cytoplasm. It catalyses the reaction (R)-pantothenate + ATP = (R)-4'-phosphopantothenate + ADP + H(+). It participates in cofactor biosynthesis; coenzyme A biosynthesis; CoA from (R)-pantothenate: step 1/5. Functionally, catalyzes the phosphorylation of pantothenate (Pan), the first step in CoA biosynthesis. In Azoarcus sp. (strain BH72), this protein is Type III pantothenate kinase.